We begin with the raw amino-acid sequence, 334 residues long: Ornithine carbamoyltransferase (334 aa).

Carbamoyl phosphate is bound by residues 57–60 (STRT), glutamine 84, arginine 108, and 135–138 (HPTQ). Residues asparagine 168, aspartate 232, and 236–237 (SM) each bind L-ornithine. Residues 274-275 (CL) and arginine 321 contribute to the carbamoyl phosphate site.

The protein belongs to the aspartate/ornithine carbamoyltransferase superfamily. OTCase family.

It is found in the cytoplasm. The enzyme catalyses carbamoyl phosphate + L-ornithine = L-citrulline + phosphate + H(+). The protein operates within amino-acid biosynthesis; L-arginine biosynthesis; L-arginine from L-ornithine and carbamoyl phosphate: step 1/3. In terms of biological role, reversibly catalyzes the transfer of the carbamoyl group from carbamoyl phosphate (CP) to the N(epsilon) atom of ornithine (ORN) to produce L-citrulline. The protein is Ornithine carbamoyltransferase of Actinobacillus pleuropneumoniae serotype 5b (strain L20).